The chain runs to 220 residues: Protein-L-isoaspartate O-methyltransferase (220 aa).

S70 is a catalytic residue.

The protein belongs to the methyltransferase superfamily. L-isoaspartyl/D-aspartyl protein methyltransferase family.

The protein localises to the cytoplasm. It carries out the reaction [protein]-L-isoaspartate + S-adenosyl-L-methionine = [protein]-L-isoaspartate alpha-methyl ester + S-adenosyl-L-homocysteine. Catalyzes the methyl esterification of L-isoaspartyl residues in peptides and proteins that result from spontaneous decomposition of normal L-aspartyl and L-asparaginyl residues. It plays a role in the repair and/or degradation of damaged proteins. This is Protein-L-isoaspartate O-methyltransferase from Halorhodospira halophila (strain DSM 244 / SL1) (Ectothiorhodospira halophila (strain DSM 244 / SL1)).